Reading from the N-terminus, the 603-residue chain is Polypeptide N-acetylgalactosaminyltransferase 9 (603 aa).

The Cytoplasmic portion of the chain corresponds to 1–6; the sequence is MAVARK. Residues 7-29 form a helical; Signal-anchor for type II membrane protein membrane-spanning segment; that stretch reads IRTLLTVNILVFVGIVLFSVYCR. At 30–603 the chain is on the lumenal side; that stretch reads LQGRSQELVR…IRNWIKHARH (574 aa). 2 disulfide bridges follow: C141/C372 and C363/C442. Positions 150–261 are catalytic subdomain A; sequence LPQVSVVFIF…TGWAEPALSR (112 aa). Substrate contacts are provided by D191 and R222. Mn(2+) contacts are provided by D245, H247, and H377. The tract at residues 318–380 is catalytic subdomain B; that stretch reads PIRTPAMIGC…PCSRVAHIER (63 aa). Substrate is bound by residues R380 and Y385. The N-linked (GlcNAc...) asparagine glycan is linked to N460. A Ricin B-type lectin domain is found at 464-600; the sequence is TYGEVRNSKA…KWMIRNWIKH (137 aa). 3 cysteine pairs are disulfide-bonded: C477–C493, C525–C540, and C567–C587.

The protein belongs to the glycosyltransferase 2 family. GalNAc-T subfamily. The cofactor is Mn(2+). As to expression, specifically expressed in brain. Not expressed in heart, placenta, lung, liver, skeletal muscle, kidney, pancreas, spleen, thymus, prostate, testis, ovary, small intestine, colon and leukocyte. In brain, it is expressed in cerebellum, frontal lobe, temporal lobe, putamen and spinal cord, weakly expressed in cerebral cortex. Not expressed in medulla and occipital pole.

It localises to the golgi apparatus membrane. The enzyme catalyses L-seryl-[protein] + UDP-N-acetyl-alpha-D-galactosamine = a 3-O-[N-acetyl-alpha-D-galactosaminyl]-L-seryl-[protein] + UDP + H(+). It carries out the reaction L-threonyl-[protein] + UDP-N-acetyl-alpha-D-galactosamine = a 3-O-[N-acetyl-alpha-D-galactosaminyl]-L-threonyl-[protein] + UDP + H(+). Its pathway is protein modification; protein glycosylation. Catalyzes the initial reaction in O-linked oligosaccharide biosynthesis, the transfer of an N-acetyl-D-galactosamine residue to a serine or threonine residue on the protein receptor. Does not glycosylate apomucin or SDC3. The polypeptide is Polypeptide N-acetylgalactosaminyltransferase 9 (GALNT9) (Homo sapiens (Human)).